Reading from the N-terminus, the 471-residue chain is 5-hydroxytryptamine receptor 2A (471 aa).

Topologically, residues methionine 1–leucine 80 are extracellular. 5 N-linked (GlcNAc...) asparagine glycosylation sites follow: asparagine 8, asparagine 38, asparagine 44, asparagine 51, and asparagine 54. A helical membrane pass occupies residues threonine 81–methionine 97. The Cytoplasmic segment spans residues alanine 98 to tyrosine 111. The helical transmembrane segment at phenylalanine 112–tyrosine 137 threads the bilayer. Residues glycine 138–lysine 146 are Extracellular-facing. Residues leucine 147–leucine 171 traverse the membrane as a helical segment. Cysteine 148 and cysteine 227 are oxidised to a cystine. Aspartate 155 lines the serotonin pocket. Residues aspartate 172–tyrosine 174 carry the DRY motif; important for ligand-induced conformation changes motif. Topologically, residues aspartate 172–lysine 191 are cytoplasmic. Residues alanine 192–leucine 215 traverse the membrane as a helical segment. Topologically, residues glutamine 216–aspartate 232 are extracellular. A helical transmembrane segment spans residues asparagine 233–isoleucine 258. Over lysine 259–cysteine 322 the chain is Cytoplasmic. Serine 280 is subject to Phosphoserine. A helical membrane pass occupies residues lysine 323–isoleucine 348. Asparagine 343 contacts serotonin. The cysteines at positions 349 and 353 are disulfide-linked. Residues cysteine 349–aspartate 356 are Extracellular-facing. A helical transmembrane segment spans residues valine 357–leucine 382. Residues asparagine 376–tyrosine 380 carry the NPxxY motif; important for ligand-induced conformation changes and signaling motif. The Cytoplasmic segment spans residues phenylalanine 383–valine 471. The segment covering glutamine 451–asparagine 465 has biased composition (basic and acidic residues). The disordered stretch occupies residues glutamine 451 to valine 471. The short motif at serine 469–valine 471 is the PDZ-binding element.

The protein belongs to the G-protein coupled receptor 1 family. As to quaternary structure, interacts (via C-terminus) with MPDZ and PATJ. May interact (via C-terminus) with MPP3, PRDX6, DLG4, DLG1, CASK, APBA1 and MAGI2. Interacts with GRM2 and DRD2; this may affect signaling. Detected in brain cortex (at protein level). Detected in blood platelets.

The protein resides in the cell membrane. The protein localises to the cell projection. It localises to the dendrite. It is found in the axon. Its subcellular location is the cytoplasmic vesicle. The protein resides in the membrane. The protein localises to the caveola. It localises to the presynapse. Its activity is regulated as follows. G-protein coupled receptor activity is regulated by lipids: oleamide increases HTR2A-mediated activity. Inhibited by IHCH-7179 small molecule: IHCH-7179 acts both as an agonist activator for HTR1A and as an antagonist inhibitor for HTR2A. G-protein coupled receptor for 5-hydroxytryptamine (serotonin). Also functions as a receptor for various drugs and psychoactive substances, including mescaline, psilocybin, 1-(2,5-dimethoxy-4-iodophenyl)-2-aminopropane (DOI) and lysergic acid diethylamide (LSD). Ligand binding causes a conformation change that triggers signaling via guanine nucleotide-binding proteins (G proteins) and modulates the activity of downstream effectors. HTR2A is coupled to G(q)/G(11) G alpha proteins and activates phospholipase C-beta, releasing diacylglycerol (DAG) and inositol 1,4,5-trisphosphate (IP3) second messengers that modulate the activity of phosphatidylinositol 3-kinase and promote the release of Ca(2+) ions from intracellular stores, respectively. Beta-arrestin family members inhibit signaling via G proteins and mediate activation of alternative signaling pathways. Affects neural activity, perception, cognition and mood. Plays a role in the regulation of behavior, including responses to anxiogenic situations and psychoactive substances. Plays a role in intestinal smooth muscle contraction, and may play a role in arterial vasoconstriction. Functionally, (Microbial infection) Acts as a receptor for human JC polyomavirus/JCPyV. This chain is 5-hydroxytryptamine receptor 2A, found in Homo sapiens (Human).